A 207-amino-acid chain; its full sequence is Ras-related protein Rab7A (207 aa).

GTP contacts are provided by residues 15–22 (GDSGVGKT), 63–67 (DTAGQ), and 125–128 (NKID). Residues cysteine 205 and cysteine 207 are each lipidated (S-geranylgeranyl cysteine). Cysteine 207 carries the cysteine methyl ester modification.

This sequence belongs to the small GTPase superfamily. Rab family.

The protein resides in the cell membrane. Its function is as follows. Protein transport. Probably involved in vesicular traffic. This Mesembryanthemum crystallinum (Common ice plant) protein is Ras-related protein Rab7A.